Consider the following 110-residue polypeptide: Small ribosomal subunit protein uS17 (110 aa).

It belongs to the universal ribosomal protein uS17 family. As to quaternary structure, part of the 30S ribosomal subunit.

One of the primary rRNA binding proteins, it binds specifically to the 5'-end of 16S ribosomal RNA. This chain is Small ribosomal subunit protein uS17, found in Petrotoga mobilis (strain DSM 10674 / SJ95).